The chain runs to 435 residues: ATP-dependent protease ATPase subunit HslU (435 aa).

ATP-binding positions include Ile18, 60–65 (GVGKTE), Asp248, Glu313, and Arg385.

The protein belongs to the ClpX chaperone family. HslU subfamily. In terms of assembly, a double ring-shaped homohexamer of HslV is capped on each side by a ring-shaped HslU homohexamer. The assembly of the HslU/HslV complex is dependent on binding of ATP.

It is found in the cytoplasm. Functionally, ATPase subunit of a proteasome-like degradation complex; this subunit has chaperone activity. The binding of ATP and its subsequent hydrolysis by HslU are essential for unfolding of protein substrates subsequently hydrolyzed by HslV. HslU recognizes the N-terminal part of its protein substrates and unfolds these before they are guided to HslV for hydrolysis. The polypeptide is ATP-dependent protease ATPase subunit HslU (Roseobacter denitrificans (strain ATCC 33942 / OCh 114) (Erythrobacter sp. (strain OCh 114))).